The chain runs to 373 residues: PqqA peptide cyclase (373 aa).

The Radical SAM core domain maps to 9–224; it reads LTKPRWLLAE…QSYKEKVKGR (216 aa). The [4Fe-4S] cluster site is built by C23, C27, and C30.

It belongs to the radical SAM superfamily. PqqE family. In terms of assembly, interacts with PqqD. The interaction is necessary for activity of PqqE. [4Fe-4S] cluster is required as a cofactor.

It catalyses the reaction [PQQ precursor protein] + S-adenosyl-L-methionine = E-Y cross-linked-[PQQ precursor protein] + 5'-deoxyadenosine + L-methionine + H(+). It functions in the pathway cofactor biosynthesis; pyrroloquinoline quinone biosynthesis. In terms of biological role, catalyzes the cross-linking of a glutamate residue and a tyrosine residue in the PqqA protein as part of the biosynthesis of pyrroloquinoline quinone (PQQ). The polypeptide is PqqA peptide cyclase (Methylococcus capsulatus (strain ATCC 33009 / NCIMB 11132 / Bath)).